Here is a 319-residue protein sequence, read N- to C-terminus: NH(3)-dependent NAD(+) synthetase (319 aa).

33-40 (GLSGGIDS) serves as a coordination point for ATP. D39 is a Mg(2+) binding site. R169 lines the deamido-NAD(+) pocket. An ATP-binding site is contributed by T189. E194 provides a ligand contact to Mg(2+). Positions 202 and 209 each coordinate deamido-NAD(+). ATP contacts are provided by K218 and T240.

It belongs to the NAD synthetase family. In terms of assembly, homodimer.

The catalysed reaction is deamido-NAD(+) + NH4(+) + ATP = AMP + diphosphate + NAD(+) + H(+). Its pathway is cofactor biosynthesis; NAD(+) biosynthesis; NAD(+) from deamido-NAD(+) (ammonia route): step 1/1. Its function is as follows. Catalyzes the ATP-dependent amidation of deamido-NAD to form NAD. Uses ammonia as a nitrogen source. The chain is NH(3)-dependent NAD(+) synthetase from Mesorhizobium japonicum (strain LMG 29417 / CECT 9101 / MAFF 303099) (Mesorhizobium loti (strain MAFF 303099)).